The following is a 357-amino-acid chain: UDP-N-acetylglucosamine--N-acetylmuramyl-(pentapeptide) pyrophosphoryl-undecaprenol N-acetylglucosamine transferase (357 aa).

Arginine 166, serine 196, and glutamine 290 together coordinate UDP-N-acetyl-alpha-D-glucosamine.

The protein belongs to the glycosyltransferase 28 family. MurG subfamily.

It localises to the cell membrane. The catalysed reaction is Mur2Ac(oyl-L-Ala-gamma-D-Glu-L-Lys-D-Ala-D-Ala)-di-trans,octa-cis-undecaprenyl diphosphate + UDP-N-acetyl-alpha-D-glucosamine = beta-D-GlcNAc-(1-&gt;4)-Mur2Ac(oyl-L-Ala-gamma-D-Glu-L-Lys-D-Ala-D-Ala)-di-trans,octa-cis-undecaprenyl diphosphate + UDP + H(+). Its pathway is cell wall biogenesis; peptidoglycan biosynthesis. In terms of biological role, cell wall formation. Catalyzes the transfer of a GlcNAc subunit on undecaprenyl-pyrophosphoryl-MurNAc-pentapeptide (lipid intermediate I) to form undecaprenyl-pyrophosphoryl-MurNAc-(pentapeptide)GlcNAc (lipid intermediate II). The chain is UDP-N-acetylglucosamine--N-acetylmuramyl-(pentapeptide) pyrophosphoryl-undecaprenol N-acetylglucosamine transferase from Staphylococcus epidermidis (strain ATCC 35984 / DSM 28319 / BCRC 17069 / CCUG 31568 / BM 3577 / RP62A).